We begin with the raw amino-acid sequence, 252 residues long: Protein lin-28 homolog B (252 aa).

The interval 1–30 is disordered; that stretch reads MAEGGAARGTREEQGKLPEQEEEEEEDPQV. The span at 9–19 shows a compositional bias: basic and acidic residues; it reads GTREEQGKLPE. A CSD domain is found at 32–105; the sequence is LGSGHCKWFN…GFESLRVTGP (74 aa). 2 CCHC-type zinc fingers span residues 130 to 147 and 152 to 169; these read DRCY…ECNL and KKCH…NCPH. The Zn(2+) site is built by C132, C135, H140, C145, C154, C157, H162, and C167. The disordered stretch occupies residues 172–252; it reads VPQHPTTSQG…KGPSVQKKKK (81 aa). Over residues 213 to 222 the composition is skewed to basic and acidic residues; it reads GRSELSERSS. The span at 225–238 shows a compositional bias: polar residues; sequence PQEASLSKISTSPE.

The protein belongs to the lin-28 family.

The protein localises to the nucleus. It is found in the nucleolus. Its function is as follows. Suppressor of specific microRNA (miRNA) biogenesis. Binds target primary miRNA transcripts and sequester them in the nucleolus, away from the microprocessor complex, hence preventing their processing into mature miRNA. The specific interaction with target pri-miRNAs occurs via an 5'-GGAG-3' motif in the pre-miRNA terminal loop. The chain is Protein lin-28 homolog B (lin28b) from Xenopus laevis (African clawed frog).